The sequence spans 1077 residues: TSC22 domain family protein 1 (1077 aa).

The interval 1-98 is required for interaction with TGFBR1 and promotion of TGF-beta signaling; the sequence is MHQPPESTAA…SQAQLQGQPL (98 aa). Disordered regions lie at residues 22–112, 125–283, 458–492, 842–874, and 909–947; these read MAHP…SGFQ, ISSN…VPSS, QTPT…SVGS, SSAA…GSLV, and QAIG…SDGS. The segment covering 58-70 has biased composition (pro residues); it reads FPPPSLLQPPPPA. Residues 84–96 are compositionally biased toward low complexity; that stretch reads SLNLLSQAQLQGQ. A compositionally biased stretch (acidic residues) spans 133–142; sequence EDTESYDDLD. The segment covering 216–240 has biased composition (basic residues); that stretch reads HPHHLHHHHHPHHGHHLHHGHHHSS. The residue at position 263 (Ser263) is a Phosphoserine. Residues 471–489 are compositionally biased toward low complexity; that stretch reads TSGSSVSSSVSTLSHYTES. The span at 852-874 shows a compositional bias: polar residues; sequence VPTNLVPPQNIAQPPATQNGSLV. Residues 933 to 947 are compositionally biased toward low complexity; that stretch reads MSGDSGGMSAVSDGS. A leucine-zipper region spans residues 1010 to 1031; that stretch reads LKEQIKELIEKNSQLEQENNLL. Positions 1042–1077 are disordered; that stretch reads QFQAQLQTGSPPATTQPQGTTQPPAQPASQGSGSTA. Low complexity predominate over residues 1048–1077; that stretch reads QTGSPPATTQPQGTTQPPAQPASQGSGSTA.

It belongs to the TSC-22/Dip/Bun family. As to quaternary structure, forms homodimers. Forms heterodimers. Component of a complex composed of TSC22D1 (via N-terminus), TGFBR1 and TGFBR2; the interaction between TSC22D1 and TGFBR1 is inhibited by SMAD7 and promoted by TGFB1. Interacts with SMAD7; the interaction requires TGF-beta and the interaction is inhibited by TGFBR1. Interacts with TPT1/fortilin; interaction results in the destabilization of TSC22D1 protein and prevents TSC22D1-mediated apoptosis. Interacts with SMAD4 (via N-terminus). Interacts with ACVRL1/ALK1, ACVR1/ALK2, BMPR1A/ALK3, ACVR1B/ALK4, BMPR1B/ALK6, ACVR2A/ACTRII, and BMPR2. Interacts with SMAD6. Interacts with TFE3; the interaction is enhanced in the presence of TGF-beta. Forms a heterodimer with TSC22D4/THG1. In terms of assembly, forms a heterodimer with TSC22D4/THG1. Interacts with histone H1-2. Interacts with GNL3. In terms of tissue distribution, expressed in bone marrow cells (at protein level). Expressed in T-cells. Expressed in the brain. As to expression, expressed in the myoepithelial cells of the mammary gland ducts and alveoli, expression is consistent throughout pregnancy, lactation and involution (at protein level). Expressed in the cortex, medulla and papilla of the kidney. Expressed in the myoepithelial cells of the mammary gland, expression significantly increases in the secretory luminal epithelium of the mammary gland at the initiation of involution, with levels decreasing from day 3 of involution onwards (at protein level). Expressed in the cortex, medulla and papilla of the kidney.

Its subcellular location is the cytoplasm. The protein resides in the nucleus. The protein localises to the cell membrane. It localises to the mitochondrion. Functionally, transcriptional repressor. Acts on the C-type natriuretic peptide (CNP) promoter. Acts to promote CASP3-mediated apoptosis. Positively regulates TGF-beta signaling by interacting with SMAD7 which inhibits binding of SMAD7 to TGFBR1, preventing recruitment of SMURF ubiquitin ligases to TGFBR1 and inhibiting SMURF-mediated ubiquitination and degradation of TGFBR1. Contributes to enhancement of TGF-beta signaling by binding to and modulating the transcription activator activity of SMAD4. Promotes TGF-beta-induced transcription of COL1A2; via its interaction with TFE3 at E-boxes in the gene proximal promoter. Plays a role in the repression of hematopoietic precursor cell growth. Promotes IL2 deprivation-induced apoptosis in T-lymphocytes, via repression of TSC22D3/GILZ transcription and activation of the caspase cascade. May act to negatively regulate TGFB3 signaling and thereby inhibit cell death in mammary gland cells. Its function is as follows. Positively regulates cell death in response to TGFB3 during mammary gland involution. This is TSC22 domain family protein 1 from Mus musculus (Mouse).